Here is a 210-residue protein sequence, read N- to C-terminus: Probable septum site-determining protein MinC (210 aa).

The protein belongs to the MinC family. Interacts with MinD and FtsZ.

Functionally, cell division inhibitor that blocks the formation of polar Z ring septums. Rapidly oscillates between the poles of the cell to destabilize FtsZ filaments that have formed before they mature into polar Z rings. Prevents FtsZ polymerization. The sequence is that of Probable septum site-determining protein MinC from Thermotoga sp. (strain RQ2).